The sequence spans 318 residues: MVSVYLLANFGGPRHASDIEVFLTSLLTDRDVTGKFLPPFIHKRLFSFIAKKRVAKVLPQYNCIGGFSPIYRDTEDLADTLSLYLDAPVITFHRYLPDTHQLTVQRLKAFGDCPVIGVPLFPHFTYSVTGSIVRFIHAHLPLLNISWISHFGNHPQFIFCMIDHILKFLQSHDISIHDCCLLFSAHGLPMRYINKGDPYNKHCEKSFKTISERLPNIETHLCYQSKFGPGRWLTPSTKDVCETLKTDKTYVLIVPFGFTSDHIETLYEIEKEYIPILKAREYRALRVPAIYQSPEWAASLATIIQSTPRAEKESLIKP.

2 residues coordinate Fe cation: His186 and Glu264.

Belongs to the ferrochelatase family.

The protein resides in the cytoplasm. The enzyme catalyses heme b + 2 H(+) = protoporphyrin IX + Fe(2+). It functions in the pathway porphyrin-containing compound metabolism; protoheme biosynthesis; protoheme from protoporphyrin-IX: step 1/1. Catalyzes the ferrous insertion into protoporphyrin IX. The polypeptide is Ferrochelatase (Chlamydia felis (strain Fe/C-56) (Chlamydophila felis)).